The chain runs to 438 residues: Glycogen synthase (438 aa).

K16 is a binding site for ADP-alpha-D-glucose.

This sequence belongs to the glycosyltransferase 1 family. Bacterial/plant glycogen synthase subfamily.

The enzyme catalyses [(1-&gt;4)-alpha-D-glucosyl](n) + ADP-alpha-D-glucose = [(1-&gt;4)-alpha-D-glucosyl](n+1) + ADP + H(+). It functions in the pathway glycan biosynthesis; glycogen biosynthesis. Synthesizes alpha-1,4-glucan chains using ADP-glucose. The chain is Glycogen synthase from Thermus caldophilus.